Here is a 473-residue protein sequence, read N- to C-terminus: Uronate isomerase (473 aa).

This sequence belongs to the metallo-dependent hydrolases superfamily. Uronate isomerase family.

The enzyme catalyses D-glucuronate = D-fructuronate. The catalysed reaction is aldehydo-D-galacturonate = keto-D-tagaturonate. Its pathway is carbohydrate metabolism; pentose and glucuronate interconversion. In Bacillus licheniformis (strain ATCC 14580 / DSM 13 / JCM 2505 / CCUG 7422 / NBRC 12200 / NCIMB 9375 / NCTC 10341 / NRRL NRS-1264 / Gibson 46), this protein is Uronate isomerase.